The sequence spans 1271 residues: Clustered mitochondria protein homolog (1271 aa).

2 TPR repeats span residues 104–138 (RHKPYTLAAVYEHLNKFREVIGLHFIDRRAFELGE) and 502–535 (CYGLSTDGTKVYSDSQFHEALKPIAEAFHMKPHK). A Clu domain is found at 329–580 (DQSRPQLSIL…RSTPLDIDFI (252 aa)). A compositionally biased stretch (basic and acidic residues) spans 729 to 763 (QEEKSKIEDNEKAIEEEKKEEKTEKKEEKEEKADE). The segment at 729-783 (QEEKSKIEDNEKAIEEEKKEEKTEKKEEKEEKADEEKSENEEDKTKPEEPSKGVF) is disordered. 3 TPR repeats span residues 1067–1100 (ISSYINSAYFEAANSSYVNAFKLYEKALGDWDFV), 1109–1142 (VTTLTNLAEILAQLKITDKANRLFSAALELSEKI), and 1151–1184 (AMIHYRFAGTLVNENRFDEALGHFEKAHTTFSRH). Residues 1212–1271 (QAKDKNKPKKVKAPPVPPQATTKKSKNKSKMAQTQISKLHLNSSTRFSSSSRVKPRLKKK) form a disordered region. Residues 1241 to 1253 (KMAQTQISKLHLN) are compositionally biased toward polar residues. The segment covering 1254 to 1263 (SSTRFSSSSR) has biased composition (low complexity).

Belongs to the CLU family. In terms of assembly, may associate with the eukaryotic translation initiation factor 3 (eIF-3) complex.

The protein resides in the cytoplasm. MRNA-binding protein involved in proper cytoplasmic distribution of mitochondria. This is Clustered mitochondria protein homolog from Meyerozyma guilliermondii (strain ATCC 6260 / CBS 566 / DSM 6381 / JCM 1539 / NBRC 10279 / NRRL Y-324) (Yeast).